The following is a 215-amino-acid chain: Cytochrome b6 (215 aa).

The chain crosses the membrane as a helical span at residues 32–52 (IFYCLGGITLTCFLVQVATGF). Cys-35 provides a ligand contact to heme c. Heme b is bound by residues His-86 and His-100. The next 3 membrane-spanning stretches (helical) occupy residues 90 to 110 (ASMM…TGGF), 116 to 136 (LTWV…VTGY), and 186 to 206 (LHTF…FPMI). Heme b-binding residues include His-187 and His-202.

The protein belongs to the cytochrome b family. PetB subfamily. As to quaternary structure, the 4 large subunits of the cytochrome b6-f complex are cytochrome b6, subunit IV (17 kDa polypeptide, PetD), cytochrome f and the Rieske protein, while the 4 small subunits are PetG, PetL, PetM and PetN. The complex functions as a dimer. It depends on heme b as a cofactor. Heme c is required as a cofactor.

It localises to the plastid. It is found in the chloroplast thylakoid membrane. Functionally, component of the cytochrome b6-f complex, which mediates electron transfer between photosystem II (PSII) and photosystem I (PSI), cyclic electron flow around PSI, and state transitions. This Agrostis stolonifera (Creeping bentgrass) protein is Cytochrome b6.